Here is a 512-residue protein sequence, read N- to C-terminus: Putative ribose/galactose/methyl galactoside import ATP-binding protein 1 (512 aa).

ABC transporter domains follow at residues 14-251 (IALT…VGRQ) and 262-507 (TSAN…TQRE). 46-53 (GENGAGKS) provides a ligand contact to ATP.

The protein belongs to the ABC transporter superfamily. Carbohydrate importer 2 (CUT2) (TC 3.A.1.2) family.

It is found in the cell inner membrane. The enzyme catalyses D-ribose(out) + ATP + H2O = D-ribose(in) + ADP + phosphate + H(+). It catalyses the reaction D-galactose(out) + ATP + H2O = D-galactose(in) + ADP + phosphate + H(+). In terms of biological role, part of an ABC transporter complex involved in carbohydrate import. Could be involved in ribose, galactose and/or methyl galactoside import. Responsible for energy coupling to the transport system. The polypeptide is Putative ribose/galactose/methyl galactoside import ATP-binding protein 1 (Burkholderia lata (strain ATCC 17760 / DSM 23089 / LMG 22485 / NCIMB 9086 / R18194 / 383)).